An 831-amino-acid chain; its full sequence is MYKLPQRNCADKQEYTVHMRKMGMVIFACLLLLIIFPTFGYADINTSSPLSIGQTLSSPDGVYELGFFSPNNSRKQYVGIWFKNIAPQVVVWVANRDKPVTKTAANLTISSNGSLILLDGTQDVIWSTGEAFTSNKCHAELLDTGNLVVIDDVSGKTLWKSFENLGNTMLPQSSVMYDIPRGKNRVLTSWRSNSDPSPGEFTLEFTPQVPPQGLIRRGSSPYWRSGPWAKTRFSGIPGIDASYVSPFTVLQDVAKGTASFSYSMLRNYKLSYVTLTSEGKMKILWNDGKSWKLHFEAPTSSCDLYRACGPFGLCVRSRNPKCICLKGFVPKSDDEWKKGNWTSGCVRRTQLSCHTNSSTKTQGKETDSFYHMTRVKTPDLYQLAGFLNAEQCYQDCLGNCSCTAFAYISGIGCLVWNRELVDTVQFLSDGESLSLRLASSELAGSNRTKIILGTTVSLSIFVILVFAAYKSWRYRTKQNEPNPMFIHSSQDAWAKDMEPQDVSGVNLFDMHTIRTATNNFSSSNKLGQGGFGPVYKGKLVDGKEIAVKRLSSSSGQGTDEFMNEIRLISKLQHKNLVRLLGCCIKGEEKLLIYEYLVNKSLDVFLFDSTLKFEIDWQKRFNIIQGVARGLLYLHRDSRLRVIHRDLKVSNILLDEKMIPKISDFGLARMSQGTQYQDNTRRVVGTLGYMAPEYAWTGVFSEKSDIYSFGVLLLEIIIGEKISRFSEEGKTLLAYAWESWCETKGVDLLDQALADSSHPAEVGRCVQIGLLCVQHQPADRPNTLELMSMLTTISELPSPKQPTFTVHSRDDDSTSNDLITVNEITQSVIQGR.

Residues 1–42 (MYKLPQRNCADKQEYTVHMRKMGMVIFACLLLLIIFPTFGYA) form the signal peptide. The Bulb-type lectin domain occupies 43–162 (DINTSSPLSI…VSGKTLWKSF (120 aa)). The Extracellular segment spans residues 43 to 448 (DINTSSPLSI…SSELAGSNRT (406 aa)). N45, N71, N106, and N112 each carry an N-linked (GlcNAc...) asparagine glycan. An EGF-like; atypical domain is found at 298-334 (PTSSCDLYRACGPFGLCVRSRNPKCICLKGFVPKSDD). Intrachain disulfides connect C302-C314 and C308-C322. Residues N340, N356, N399, and N446 are each glycosylated (N-linked (GlcNAc...) asparagine). A PAN domain is found at 353–439 (CHTNSSTKTQ…GESLSLRLAS (87 aa)). 2 cysteine pairs are disulfide-bonded: C392/C413 and C396/C402. A helical membrane pass occupies residues 449 to 469 (KIILGTTVSLSIFVILVFAAY). The Cytoplasmic portion of the chain corresponds to 470–831 (KSWRYRTKQN…EITQSVIQGR (362 aa)). In terms of domain architecture, Protein kinase spans 520 to 803 (FSSSNKLGQG…ELPSPKQPTF (284 aa)). ATP is bound by residues 526 to 534 (LGQGGFGPV) and K548. Phosphoserine is present on residues S554 and S569. Residues 609 to 626 (TLKFEIDWQKRFNIIQGV) are caM-binding. The Proton acceptor role is filled by D645. Phosphoserine is present on residues S649 and S662. T679 bears the Phosphothreonine mark. Phosphoserine occurs at positions 722 and 814.

The protein belongs to the protein kinase superfamily. Ser/Thr protein kinase family.

It localises to the cell membrane. The catalysed reaction is L-seryl-[protein] + ATP = O-phospho-L-seryl-[protein] + ADP + H(+). It catalyses the reaction L-threonyl-[protein] + ATP = O-phospho-L-threonyl-[protein] + ADP + H(+). This is G-type lectin S-receptor-like serine/threonine-protein kinase At1g61390 from Arabidopsis thaliana (Mouse-ear cress).